Consider the following 545-residue polypeptide: Glucose-6-phosphate isomerase (545 aa).

Residue Glu-351 is the Proton donor of the active site. Active-site residues include His-382 and Lys-510.

This sequence belongs to the GPI family.

Its subcellular location is the cytoplasm. The catalysed reaction is alpha-D-glucose 6-phosphate = beta-D-fructose 6-phosphate. The protein operates within carbohydrate biosynthesis; gluconeogenesis. Its pathway is carbohydrate degradation; glycolysis; D-glyceraldehyde 3-phosphate and glycerone phosphate from D-glucose: step 2/4. In terms of biological role, catalyzes the reversible isomerization of glucose-6-phosphate to fructose-6-phosphate. The protein is Glucose-6-phosphate isomerase of Shewanella frigidimarina (strain NCIMB 400).